The sequence spans 109 residues: Enhancer of rudimentary homolog (109 aa).

The protein belongs to the E(R) family. In terms of assembly, homodimer.

In terms of biological role, may have a role in the cell cycle. The sequence is that of Enhancer of rudimentary homolog from Arabidopsis thaliana (Mouse-ear cress).